We begin with the raw amino-acid sequence, 279 residues long: Acetylglutamate kinase (279 aa).

Residues 64 to 65 (GG), Arg86, and Asn177 each bind substrate.

The protein belongs to the acetylglutamate kinase family. ArgB subfamily.

The protein localises to the cytoplasm. It catalyses the reaction N-acetyl-L-glutamate + ATP = N-acetyl-L-glutamyl 5-phosphate + ADP. It participates in amino-acid biosynthesis; L-arginine biosynthesis; N(2)-acetyl-L-ornithine from L-glutamate: step 2/4. Its function is as follows. Catalyzes the ATP-dependent phosphorylation of N-acetyl-L-glutamate. The protein is Acetylglutamate kinase of Campylobacter jejuni subsp. jejuni serotype O:2 (strain ATCC 700819 / NCTC 11168).